Here is a 231-residue protein sequence, read N- to C-terminus: Large ribosomal subunit protein uL1 (231 aa).

This sequence belongs to the universal ribosomal protein uL1 family. Part of the 50S ribosomal subunit.

Functionally, binds directly to 23S rRNA. The L1 stalk is quite mobile in the ribosome, and is involved in E site tRNA release. Its function is as follows. Protein L1 is also a translational repressor protein, it controls the translation of the L11 operon by binding to its mRNA. This Halalkalibacterium halodurans (strain ATCC BAA-125 / DSM 18197 / FERM 7344 / JCM 9153 / C-125) (Bacillus halodurans) protein is Large ribosomal subunit protein uL1.